The chain runs to 307 residues: Isethionate sulfite-lyase activating enzyme (307 aa).

A Radical SAM core domain is found at His-22 to Ser-307. Positions 36, 40, 43, 62, 68, 71, 75, 95, 98, 102, and 106 each coordinate [4Fe-4S] cluster. Trp-42 to Ser-44 contacts S-adenosyl-L-methionine. 4Fe-4S ferredoxin-type domains are found at residues Val-53–Asp-85 and Asp-86–His-117. S-adenosyl-L-methionine contacts are provided by residues Gly-146, Asp-195–Lys-197, and His-268.

The protein belongs to the organic radical-activating enzymes family. As to quaternary structure, monomer. [4Fe-4S] cluster serves as cofactor.

The enzyme catalyses glycyl-[protein] + reduced [flavodoxin] + S-adenosyl-L-methionine = glycin-2-yl radical-[protein] + semiquinone [flavodoxin] + 5'-deoxyadenosine + L-methionine + H(+). Its pathway is organosulfur degradation; alkanesulfonate degradation. Its function is as follows. Involved in an anaerobic respiration pathway that converts the sulfonate isethionate (2-hydroxyethanesulfonate) to ammonia, acetate and sulfide. Catalyzes activation of the isethionate sulfite-lyase IseG under anaerobic conditions by generation of an organic free radical on a glycine residue, via a homolytic cleavage of S-adenosyl-L-methionine (SAM). This Nitratidesulfovibrio vulgaris (strain ATCC 29579 / DSM 644 / CCUG 34227 / NCIMB 8303 / VKM B-1760 / Hildenborough) (Desulfovibrio vulgaris) protein is Isethionate sulfite-lyase activating enzyme.